Consider the following 160-residue polypeptide: NADH-quinone oxidoreductase subunit B (160 aa).

[4Fe-4S] cluster is bound by residues Cys37, Cys38, Cys102, and Cys132.

Belongs to the complex I 20 kDa subunit family. NDH-1 is composed of 14 different subunits. Subunits NuoB, C, D, E, F, and G constitute the peripheral sector of the complex. [4Fe-4S] cluster serves as cofactor.

Its subcellular location is the cell inner membrane. The enzyme catalyses a quinone + NADH + 5 H(+)(in) = a quinol + NAD(+) + 4 H(+)(out). NDH-1 shuttles electrons from NADH, via FMN and iron-sulfur (Fe-S) centers, to quinones in the respiratory chain. Couples the redox reaction to proton translocation (for every two electrons transferred, four hydrogen ions are translocated across the cytoplasmic membrane), and thus conserves the redox energy in a proton gradient. The polypeptide is NADH-quinone oxidoreductase subunit B (Neisseria meningitidis serogroup A / serotype 4A (strain DSM 15465 / Z2491)).